The sequence spans 598 residues: Arginine--tRNA ligase (598 aa).

The 'HIGH' region motif lies at 131 to 141 (ANPTGPMHVGH). The disordered stretch occupies residues 288-309 (KLPPPKSKKGQPPPQAQPDEEG).

This sequence belongs to the class-I aminoacyl-tRNA synthetase family. In terms of assembly, monomer.

The protein resides in the cytoplasm. It catalyses the reaction tRNA(Arg) + L-arginine + ATP = L-arginyl-tRNA(Arg) + AMP + diphosphate. In Anaeromyxobacter dehalogenans (strain 2CP-C), this protein is Arginine--tRNA ligase.